The primary structure comprises 325 residues: ATP-dependent 6-phosphofructokinase (325 aa).

Glycine 12 provides a ligand contact to ATP. An ADP-binding site is contributed by 22 to 26 (RTIVK). ATP is bound by residues 73–74 (RY) and 103–106 (GDGS). Position 104 (aspartate 104) interacts with Mg(2+). 126–128 (TID) is a binding site for substrate. Aspartate 128 functions as the Proton acceptor in the catalytic mechanism. Arginine 155 is a binding site for ADP. Residue 170–172 (MGH) coordinates substrate. ADP-binding positions include 186 to 188 (GAE), lysine 213, and 215 to 217 (KRS). Substrate is bound by residues glutamate 224, arginine 246, and 252–255 (HTQR).

Belongs to the phosphofructokinase type A (PFKA) family. ATP-dependent PFK group I subfamily. Prokaryotic clade 'B1' sub-subfamily. Homotetramer. The cofactor is Mg(2+).

The protein localises to the cytoplasm. The catalysed reaction is beta-D-fructose 6-phosphate + ATP = beta-D-fructose 1,6-bisphosphate + ADP + H(+). Its pathway is carbohydrate degradation; glycolysis; D-glyceraldehyde 3-phosphate and glycerone phosphate from D-glucose: step 3/4. With respect to regulation, allosterically activated by ADP and other diphosphonucleosides, and allosterically inhibited by phosphoenolpyruvate. Catalyzes the phosphorylation of D-fructose 6-phosphate to fructose 1,6-bisphosphate by ATP, the first committing step of glycolysis. The protein is ATP-dependent 6-phosphofructokinase of Mycoplasma mobile (strain ATCC 43663 / 163K / NCTC 11711) (Mesomycoplasma mobile).